The primary structure comprises 246 residues: Carboxy-S-adenosyl-L-methionine synthase (246 aa).

S-adenosyl-L-methionine contacts are provided by residues Y39, 64 to 66 (GCS), 89 to 90 (DN), 117 to 118 (DI), N132, and R199.

Belongs to the class I-like SAM-binding methyltransferase superfamily. Cx-SAM synthase family. In terms of assembly, homodimer.

It catalyses the reaction prephenate + S-adenosyl-L-methionine = carboxy-S-adenosyl-L-methionine + 3-phenylpyruvate + H2O. Functionally, catalyzes the conversion of S-adenosyl-L-methionine (SAM) to carboxy-S-adenosyl-L-methionine (Cx-SAM). In Erwinia tasmaniensis (strain DSM 17950 / CFBP 7177 / CIP 109463 / NCPPB 4357 / Et1/99), this protein is Carboxy-S-adenosyl-L-methionine synthase.